Here is a 273-residue protein sequence, read N- to C-terminus: Chondrolectin (273 aa).

The first 21 residues, 1-21, serve as a signal peptide directing secretion; it reads MSRVVSLLLGAALLCGHGAFC. The Extracellular portion of the chain corresponds to 22 to 216; it reads RRVVSGQKVC…VVTEAGIIPN (195 aa). Residues 35 to 179 enclose the C-type lectin domain; that stretch reads FKHPCYKMAY…CNMKHNYICK (145 aa). Disulfide bonds link cysteine 61–cysteine 178 and cysteine 144–cysteine 170. Residue asparagine 86 is glycosylated (N-linked (GlcNAc...) asparagine). Residues 217 to 237 traverse the membrane as a helical segment; the sequence is LIYVVIPTIPLLLLILVAFGT. Residues 238–273 are Cytoplasmic-facing; the sequence is CCFQMLHKSKGRTKTSPNQSTLWISKSTRKESGMEV. Residues 248–273 are disordered; it reads GRTKTSPNQSTLWISKSTRKESGMEV. Residues 251-263 show a composition bias toward polar residues; that stretch reads KTSPNQSTLWISK.

In terms of assembly, interacts with RABGGTB. Post-translationally, N-glycosylated. As to expression, found in spleen, testis, prostate and fetal liver. Expression limited to vascular muscle of testis, smooth muscle of prostate stroma, heart muscle, skeletal muscle, crypts of small intestine, and red pulp of spleen. B lymphocytes express isoform 2 only; peripheral blood T lymphocytes express isoform 3 only; granulocytes and monocytes express neither isoform 2 nor isoform 3. During development of T lymphocytes, bone marrow progenitor cells express isoform 2 only; thymocytes at different stages of maturation express predominantly isoform 2 and weakly isoform 3, and mature thymocytes express only isoform 2.

It is found in the cytoplasm. The protein resides in the membrane. The protein localises to the endoplasmic reticulum. Its subcellular location is the endoplasmic reticulum membrane. Its function is as follows. May play a role in the development of the nervous system such as in neurite outgrowth and elongation. May be involved in motor axon growth and guidance. This Homo sapiens (Human) protein is Chondrolectin (CHODL).